A 326-amino-acid polypeptide reads, in one-letter code: Zinc transporter 11 (326 aa).

The signal sequence occupies residues methionine 1 to serine 20. Topologically, residues histidine 21–lysine 49 are extracellular. Residues isoleucine 50–leucine 70 form a helical membrane-spanning segment. Residues lysine 71–glycine 75 are Cytoplasmic-facing. A helical membrane pass occupies residues phenylalanine 76–phenylalanine 96. Residues leucine 97 to proline 121 are Extracellular-facing. Residues phenylalanine 122 to alanine 142 traverse the membrane as a helical segment. Topologically, residues histidine 143–serine 174 are cytoplasmic. The helical transmembrane segment at isoleucine 175–serine 195 threads the bilayer. Residues glutamate 196 to arginine 203 are Extracellular-facing. The helical transmembrane segment at alanine 204–leucine 224 threads the bilayer. Residues arginine 225–serine 235 lie on the Cytoplasmic side of the membrane. A helical transmembrane segment spans residues isoleucine 236–isoleucine 256. The Extracellular segment spans residues aspartate 257 to glycine 262. The chain crosses the membrane as a helical span at residues serine 263–valine 283. Residues serine 284 to arginine 305 are Cytoplasmic-facing. The chain crosses the membrane as a helical span at residues tyrosine 306 to threonine 326.

This sequence belongs to the ZIP transporter (TC 2.A.5) family.

The protein localises to the cell membrane. Probably mediates zinc uptake from the rhizosphere. The sequence is that of Zinc transporter 11 (ZIP11) from Arabidopsis thaliana (Mouse-ear cress).